The sequence spans 165 residues: Interferon gamma (165 aa).

Residues 1–23 (MKYTSYILAFQLCIVLGSLGCYC) form the signal peptide. At Gln-24 the chain carries Pyrrolidone carboxylic acid. N-linked (GlcNAc...) asparagine glycans are attached at residues Asn-48 and Asn-120.

The protein belongs to the type II (or gamma) interferon family. In terms of assembly, homodimer. Interacts with IFNGR1 (via extracellular domain); this interaction promotes IFNGR1 dimerization.

It is found in the secreted. In terms of biological role, type II interferon produced by immune cells such as T-cells and NK cells that plays crucial roles in antimicrobial, antiviral, and antitumor responses by activating effector immune cells and enhancing antigen presentation. Primarily signals through the JAK-STAT pathway after interaction with its receptor IFNGR1 to affect gene regulation. Upon IFNG binding, IFNGR1 intracellular domain opens out to allow association of downstream signaling components JAK2, JAK1 and STAT1, leading to STAT1 activation, nuclear translocation and transcription of IFNG-regulated genes. Many of the induced genes are transcription factors such as IRF1 that are able to further drive regulation of a next wave of transcription. Plays a role in class I antigen presentation pathway by inducing a replacement of catalytic proteasome subunits with immunoproteasome subunits. In turn, increases the quantity, quality, and repertoire of peptides for class I MHC loading. Increases the efficiency of peptide generation also by inducing the expression of activator PA28 that associates with the proteasome and alters its proteolytic cleavage preference. Up-regulates as well MHC II complexes on the cell surface by promoting expression of several key molecules such as cathepsins B/CTSB, H/CTSH, and L/CTSL. Participates in the regulation of hematopoietic stem cells during development and under homeostatic conditions by affecting their development, quiescence, and differentiation. The protein is Interferon gamma (IFNG) of Papio anubis (Olive baboon).